The following is a 396-amino-acid chain: 1-deoxy-D-xylulose 5-phosphate reductoisomerase (396 aa).

NADPH is bound by residues Thr13, Gly14, Ser15, Ile16, and Asn127. Lys128 lines the 1-deoxy-D-xylulose 5-phosphate pocket. Glu129 serves as a coordination point for NADPH. Asp153 contacts Mn(2+). Residues Ser154, Glu155, Ser184, and His207 each coordinate 1-deoxy-D-xylulose 5-phosphate. Glu155 lines the Mn(2+) pocket. Gly213 is a binding site for NADPH. Residues Ser220, Asn225, Lys226, and Glu229 each coordinate 1-deoxy-D-xylulose 5-phosphate. Position 229 (Glu229) interacts with Mn(2+).

It belongs to the DXR family. It depends on Mg(2+) as a cofactor. Mn(2+) serves as cofactor.

It carries out the reaction 2-C-methyl-D-erythritol 4-phosphate + NADP(+) = 1-deoxy-D-xylulose 5-phosphate + NADPH + H(+). It participates in isoprenoid biosynthesis; isopentenyl diphosphate biosynthesis via DXP pathway; isopentenyl diphosphate from 1-deoxy-D-xylulose 5-phosphate: step 1/6. Its function is as follows. Catalyzes the NADPH-dependent rearrangement and reduction of 1-deoxy-D-xylulose-5-phosphate (DXP) to 2-C-methyl-D-erythritol 4-phosphate (MEP). In Pseudomonas syringae pv. syringae (strain B728a), this protein is 1-deoxy-D-xylulose 5-phosphate reductoisomerase.